A 290-amino-acid polypeptide reads, in one-letter code: Ribosomal protein L11 methyltransferase (290 aa).

The S-adenosyl-L-methionine site is built by Thr136, Gly157, Asp179, and Asn222.

This sequence belongs to the methyltransferase superfamily. PrmA family.

The protein localises to the cytoplasm. The enzyme catalyses L-lysyl-[protein] + 3 S-adenosyl-L-methionine = N(6),N(6),N(6)-trimethyl-L-lysyl-[protein] + 3 S-adenosyl-L-homocysteine + 3 H(+). Its function is as follows. Methylates ribosomal protein L11. The polypeptide is Ribosomal protein L11 methyltransferase (Porphyromonas gingivalis (strain ATCC BAA-308 / W83)).